The following is a 197-amino-acid chain: RNA pyrophosphohydrolase (197 aa).

The region spanning 6-150 is the Nudix hydrolase domain; sequence GYRPNVGIVI…KRDVYRKVMR (145 aa). The Nudix box motif lies at 38-59; it reads GGINEGENIETAMYRELYEEVG.

The protein belongs to the Nudix hydrolase family. RppH subfamily. It depends on a divalent metal cation as a cofactor.

Functionally, accelerates the degradation of transcripts by removing pyrophosphate from the 5'-end of triphosphorylated RNA, leading to a more labile monophosphorylated state that can stimulate subsequent ribonuclease cleavage. This Haemophilus ducreyi (strain 35000HP / ATCC 700724) protein is RNA pyrophosphohydrolase.